A 416-amino-acid polypeptide reads, in one-letter code: UDP-N-acetylglucosamine 1-carboxyvinyltransferase (416 aa).

Residue 22-23 (KN) participates in phosphoenolpyruvate binding. Arg92 contacts UDP-N-acetyl-alpha-D-glucosamine. Cys116 (proton donor) is an active-site residue. Cys116 bears the 2-(S-cysteinyl)pyruvic acid O-phosphothioketal mark. Residues Asp306 and Ile328 each coordinate UDP-N-acetyl-alpha-D-glucosamine.

Belongs to the EPSP synthase family. MurA subfamily.

The protein resides in the cytoplasm. It catalyses the reaction phosphoenolpyruvate + UDP-N-acetyl-alpha-D-glucosamine = UDP-N-acetyl-3-O-(1-carboxyvinyl)-alpha-D-glucosamine + phosphate. Its pathway is cell wall biogenesis; peptidoglycan biosynthesis. Functionally, cell wall formation. Adds enolpyruvyl to UDP-N-acetylglucosamine. This Buchnera aphidicola subsp. Baizongia pistaciae (strain Bp) protein is UDP-N-acetylglucosamine 1-carboxyvinyltransferase.